A 34-amino-acid chain; its full sequence is Photosystem II reaction center protein M (34 aa).

Residues 5-25 (ILAFIATVLFILVPTAFLLII) form a helical membrane-spanning segment.

It belongs to the PsbM family. PSII is composed of 1 copy each of membrane proteins PsbA, PsbB, PsbC, PsbD, PsbE, PsbF, PsbH, PsbI, PsbJ, PsbK, PsbL, PsbM, PsbT, PsbX, PsbY, PsbZ, Psb30/Ycf12, at least 3 peripheral proteins of the oxygen-evolving complex and a large number of cofactors. It forms dimeric complexes.

The protein resides in the plastid. The protein localises to the chloroplast thylakoid membrane. In terms of biological role, one of the components of the core complex of photosystem II (PSII). PSII is a light-driven water:plastoquinone oxidoreductase that uses light energy to abstract electrons from H(2)O, generating O(2) and a proton gradient subsequently used for ATP formation. It consists of a core antenna complex that captures photons, and an electron transfer chain that converts photonic excitation into a charge separation. This subunit is found at the monomer-monomer interface. The sequence is that of Photosystem II reaction center protein M from Piper cenocladum (Ant piper).